The following is a 361-amino-acid chain: Peptide chain release factor 1 (361 aa).

Gln-236 carries the post-translational modification N5-methylglutamine.

The protein belongs to the prokaryotic/mitochondrial release factor family. Post-translationally, methylated by PrmC. Methylation increases the termination efficiency of RF1.

The protein localises to the cytoplasm. Functionally, peptide chain release factor 1 directs the termination of translation in response to the peptide chain termination codons UAG and UAA. This Lactobacillus acidophilus (strain ATCC 700396 / NCK56 / N2 / NCFM) protein is Peptide chain release factor 1.